A 495-amino-acid chain; its full sequence is Growth/differentiation factor 5 (495 aa).

An N-terminal signal peptide occupies residues 1 to 27 (MRLPKLLTLLLWHLAWLDLELICTVLG). A propeptide spanning residues 28 to 375 (APDLGQRTPG…YLFSQRRKRR (348 aa)) is cleaved from the precursor. A disordered region spans residues 30 to 162 (DLGQRTPGAK…KEPFRPPPIT (133 aa)). Positions 124-137 (GGKASSKAGSAPSS) are enriched in low complexity. A compositionally biased stretch (basic and acidic residues) spans 142-156 (KTREPGTPREPKEPF). N-linked (GlcNAc...) asparagine glycosylation is present at Asn183. Intrachain disulfides connect Cys394–Cys460, Cys423–Cys492, and Cys427–Cys494.

The protein belongs to the TGF-beta family. As to quaternary structure, homodimer; disulfide-linked. Interacts with serine proteases, HTRA1 and HTRA3. Following LPS binding, may form a complex with CXCR4, HSP90AA1 and HSPA8. Interacts with high affinity with NOG; inhibits chondrogenesis. Interacts with high affinity with BMPR1B and lower affinity with BMPR1A; positively regulates chondrocyte differentiation and induces SMAD-dependent signaling. Interacts with FBN1 (via N-terminal domain) and FBN2. Interacts with TGFBR3.

The protein localises to the secreted. It is found in the cell membrane. In terms of biological role, growth factor involved in bone and cartilage formation. During cartilage development regulates differentiation of chondrogenic tissue through two pathways. Firstly, positively regulates differentiation of chondrogenic tissue through its binding of high affinity with BMPR1B and of less affinity with BMPR1A, leading to induction of SMAD1-SMAD5-SMAD8 complex phosphorylation and then SMAD protein signaling transduction. Secondly, negatively regulates chondrogenic differentiation through its interaction with NOG. Required to prevent excessive muscle loss upon denervation. This function requires SMAD4 and is mediated by phosphorylated SMAD1/5/8. Binds bacterial lipopolysaccharide (LPS) and mediates LPS-induced inflammatory response, including TNF secretion by monocytes. The protein is Growth/differentiation factor 5 (Gdf5) of Mus musculus (Mouse).